A 259-amino-acid polypeptide reads, in one-letter code: Imidazole glycerol phosphate synthase subunit HisF (259 aa).

Catalysis depends on residues Asp11 and Asp130.

This sequence belongs to the HisA/HisF family. As to quaternary structure, heterodimer of HisH and HisF.

It is found in the cytoplasm. The enzyme catalyses 5-[(5-phospho-1-deoxy-D-ribulos-1-ylimino)methylamino]-1-(5-phospho-beta-D-ribosyl)imidazole-4-carboxamide + L-glutamine = D-erythro-1-(imidazol-4-yl)glycerol 3-phosphate + 5-amino-1-(5-phospho-beta-D-ribosyl)imidazole-4-carboxamide + L-glutamate + H(+). It participates in amino-acid biosynthesis; L-histidine biosynthesis; L-histidine from 5-phospho-alpha-D-ribose 1-diphosphate: step 5/9. Functionally, IGPS catalyzes the conversion of PRFAR and glutamine to IGP, AICAR and glutamate. The HisF subunit catalyzes the cyclization activity that produces IGP and AICAR from PRFAR using the ammonia provided by the HisH subunit. The protein is Imidazole glycerol phosphate synthase subunit HisF of Lactococcus lactis subsp. cremoris (strain SK11).